The sequence spans 59 residues: Chromatin protein Cren7 (59 aa).

Belongs to the Cren7 family. Monomer. In terms of processing, methylated at multiple sites, to varying extents.

It localises to the chromosome. Its subcellular location is the cytoplasm. A chromatin protein, binds double-stranded DNA without sequence specificity. Constrains negative DNA supercoils. This Pyrobaculum arsenaticum (strain DSM 13514 / JCM 11321 / PZ6) protein is Chromatin protein Cren7.